A 218-amino-acid polypeptide reads, in one-letter code: Probable WRKY transcription factor 12 (218 aa).

The segment covering 49–63 has biased composition (low complexity); sequence SSLSSPSFPIHNSSS. Disordered stretches follow at residues 49–120 and 199–218; these read SSLS…DMKN and HNHI…LSSF. Polar residues predominate over residues 64–77; that stretch reads TTTTHAPLGFSNNL. Residues 105 to 116 are compositionally biased toward low complexity; it reads SNSWWRSNSGSG. The WRKY DNA-binding region spans 139 to 204; sequence SDVDVLDDGY…YEGRHNHIPS (66 aa).

It belongs to the WRKY group II-c family.

The protein resides in the nucleus. In terms of biological role, transcription factor. Interacts specifically with the W box (5'-(T)TGAC[CT]-3'), a frequently occurring elicitor-responsive cis-acting element. The protein is Probable WRKY transcription factor 12 (WRKY12) of Arabidopsis thaliana (Mouse-ear cress).